The primary structure comprises 340 residues: Probable allantoicase (340 aa).

This sequence belongs to the allantoicase family.

The catalysed reaction is allantoate + H2O = (S)-ureidoglycolate + urea. It functions in the pathway nitrogen metabolism; (S)-allantoin degradation; (S)-ureidoglycolate from allantoate (aminidohydrolase route): step 1/1. In Rhizobium meliloti (strain 1021) (Ensifer meliloti), this protein is Probable allantoicase.